The sequence spans 26 residues: Coenzyme PQQ synthesis protein A (26 aa).

The pyrroloquinoline quinone (Glu-Tyr) cross-link spans glutamate 16 to tyrosine 20.

This sequence belongs to the PqqA family.

It participates in cofactor biosynthesis; pyrroloquinoline quinone biosynthesis. Required for coenzyme pyrroloquinoline quinone (PQQ) biosynthesis. PQQ is probably formed by cross-linking a specific glutamate to a specific tyrosine residue and excising these residues from the peptide. The polypeptide is Coenzyme PQQ synthesis protein A (Gluconacetobacter diazotrophicus (strain ATCC 49037 / DSM 5601 / CCUG 37298 / CIP 103539 / LMG 7603 / PAl5)).